A 244-amino-acid polypeptide reads, in one-letter code: Phosphoadenosine 5'-phosphosulfate reductase (244 aa).

The active-site Nucleophile; cysteine thiosulfonate intermediate is the C239.

Belongs to the PAPS reductase family. CysH subfamily.

The protein resides in the cytoplasm. It carries out the reaction [thioredoxin]-disulfide + sulfite + adenosine 3',5'-bisphosphate + 2 H(+) = [thioredoxin]-dithiol + 3'-phosphoadenylyl sulfate. It participates in sulfur metabolism; hydrogen sulfide biosynthesis; sulfite from sulfate: step 3/3. Its function is as follows. Catalyzes the formation of sulfite from phosphoadenosine 5'-phosphosulfate (PAPS) using thioredoxin as an electron donor. The protein is Phosphoadenosine 5'-phosphosulfate reductase of Escherichia coli O81 (strain ED1a).